The chain runs to 427 residues: Citrate synthase (427 aa).

Lys283 carries the post-translational modification N6-acetyllysine. Active-site residues include His306 and Asp363.

It belongs to the citrate synthase family. As to quaternary structure, homohexamer.

The enzyme catalyses oxaloacetate + acetyl-CoA + H2O = citrate + CoA + H(+). Its pathway is carbohydrate metabolism; tricarboxylic acid cycle; isocitrate from oxaloacetate: step 1/2. The sequence is that of Citrate synthase (gltA) from Escherichia coli O6:H1 (strain CFT073 / ATCC 700928 / UPEC).